Reading from the N-terminus, the 538-residue chain is NAD(P)H-quinone oxidoreductase chain 4 (538 aa).

A run of 14 helical transmembrane segments spans residues 11-31 (FPWLSLSILFPIVGALIVPFI), 43-63 (YALIISLITFLITVAAYFKGF), 95-115 (MPLILLTSFITSLAVLAAWPV), 119-139 (PKLFFFLILAMDGGQIAVFAV), 143-163 (LLFFLAWELELFPVYLFLAIW), 175-195 (FIIYTAGSSLFILLAGLAMGF), 217-237 (GFQLLCYSGLLIAFGVKLPIV), 251-271 (TAPVHMLLAGILLKMGGYALL), 285-305 (FAPLLIVLGVVNIIYAALTSF), 314-334 (IAYSSISHMGFVLIGIGSFSS), 340-360 (AMLQMVSHGLIGASLFFLVGA), 382-404 (IMFALWTACAFASLALPGMSGFI), 425-445 (IVVASLAAIGVILTPIYLLSM), and 472-492 (IYIIACLLVPIIGIGLYPKIM).

This sequence belongs to the complex I subunit 4 family.

It is found in the cellular thylakoid membrane. The enzyme catalyses a plastoquinone + NADH + (n+1) H(+)(in) = a plastoquinol + NAD(+) + n H(+)(out). The catalysed reaction is a plastoquinone + NADPH + (n+1) H(+)(in) = a plastoquinol + NADP(+) + n H(+)(out). NDH-1 shuttles electrons from NAD(P)H, via FMN and iron-sulfur (Fe-S) centers, to quinones in the respiratory chain. The immediate electron acceptor for the enzyme in this species is believed to be plastoquinone. Couples the redox reaction to proton translocation (for every two electrons transferred, four hydrogen ions are translocated across the cytoplasmic membrane), and thus conserves the redox energy in a proton gradient. This Prochlorococcus marinus (strain NATL1A) protein is NAD(P)H-quinone oxidoreductase chain 4.